The primary structure comprises 307 residues: Ribosomal protein uL3 glutamine methyltransferase (307 aa).

Belongs to the protein N5-glutamine methyltransferase family. PrmB subfamily.

The catalysed reaction is L-glutaminyl-[ribosomal protein uL3] + S-adenosyl-L-methionine = N(5)-methyl-L-glutaminyl-[ribosomal protein uL3] + S-adenosyl-L-homocysteine + H(+). Its function is as follows. Methylates large ribosomal subunit protein uL3 on a specific glutamine residue. This is Ribosomal protein uL3 glutamine methyltransferase from Burkholderia pseudomallei (strain K96243).